A 154-amino-acid polypeptide reads, in one-letter code: Protein X (154 aa).

A mitochondrial targeting sequence region spans residues proline 68–phenylalanine 117.

It belongs to the orthohepadnavirus protein X family. As to quaternary structure, may form homodimer. May interact with host CEBPA, CFLAR, CREB1, DDB1, E4F1, HBXIP, HSPD1/HSP60, NFKBIA, POLR2E and SMAD4. Interacts with host SMC5-SMC6 complex and induces its degradation. Interacts with host TRPC4AP; leading to prevent ubiquitination of TRPC4AP. Interacts with host PLSCR1; this interaction promotes ubiquitination and degradation of HBx and impairs HBx-mediated cell proliferation. A fraction may be phosphorylated in insect cells and HepG2 cells, a human hepatoblastoma cell line. Phosphorylated in vitro by host protein kinase C or mitogen-activated protein kinase. N-acetylated in insect cells.

It localises to the host cytoplasm. The protein localises to the host nucleus. It is found in the host mitochondrion. Multifunctional protein that plays a role in silencing host antiviral defenses and promoting viral transcription. Does not seem to be essential for HBV infection. May be directly involved in development of cirrhosis and liver cancer (hepatocellular carcinoma). Most of cytosolic activities involve modulation of cytosolic calcium. The effect on apoptosis is controversial depending on the cell types in which the studies have been conducted. May induce apoptosis by localizing in mitochondria and causing loss of mitochondrial membrane potential. May also modulate apoptosis by binding host CFLAR, a key regulator of the death-inducing signaling complex (DISC). Promotes viral transcription by using the host E3 ubiquitin ligase DDB1 to target the SMC5-SMC6 complex to proteasomal degradation. This host complex would otherwise bind to viral episomal DNA, and prevents its transcription. Moderately stimulates transcription of many different viral and cellular transcription elements. Promoters and enhancers stimulated by HBx contain DNA binding sites for NF-kappa-B, AP-1, AP-2, c-EBP, ATF/CREB, or the calcium-activated factor NF-AT. This is Protein X from Hepatitis B virus genotype B2 (isolate Vietnam/9873/1997) (HBV-B).